The following is a 218-amino-acid chain: GTP cyclohydrolase 1 (218 aa).

Zn(2+) contacts are provided by C109, H112, and C180.

This sequence belongs to the GTP cyclohydrolase I family. In terms of assembly, toroid-shaped homodecamer, composed of two pentamers of five dimers.

It catalyses the reaction GTP + H2O = 7,8-dihydroneopterin 3'-triphosphate + formate + H(+). The protein operates within cofactor biosynthesis; 7,8-dihydroneopterin triphosphate biosynthesis; 7,8-dihydroneopterin triphosphate from GTP: step 1/1. In Haemophilus ducreyi (strain 35000HP / ATCC 700724), this protein is GTP cyclohydrolase 1.